A 366-amino-acid polypeptide reads, in one-letter code: uncharacterized protein (366 aa).

Residues 169–280 enclose the PINc domain; the sequence is ILDTSVIIDG…LNKVCELQKV (112 aa). Residue Asp-250 coordinates Mg(2+). The TRAM domain occupies 295–356; the sequence is VVLPGEEMNV…LQTAAGRMIF (62 aa).

The protein belongs to the ycf81 family. In the central section; belongs to the PINc/VapC protein family. Requires Mg(2+) as cofactor.

An RNase. This is an uncharacterized protein from Bacillus subtilis (strain 168).